A 538-amino-acid polypeptide reads, in one-letter code: 2-isopropylmalate synthase (538 aa).

In terms of domain architecture, Pyruvate carboxyltransferase spans 6-277 (LIIFDTTLRD…DSTVPLSTID (272 aa)). Mn(2+)-binding residues include D15, H206, H208, and N242. Residues 406–538 (RLEQVQVSCG…AHPDAAAQKL (133 aa)) are regulatory domain.

The protein belongs to the alpha-IPM synthase/homocitrate synthase family. LeuA type 1 subfamily. In terms of assembly, homodimer. Mn(2+) is required as a cofactor.

The protein resides in the cytoplasm. The catalysed reaction is 3-methyl-2-oxobutanoate + acetyl-CoA + H2O = (2S)-2-isopropylmalate + CoA + H(+). It participates in amino-acid biosynthesis; L-leucine biosynthesis; L-leucine from 3-methyl-2-oxobutanoate: step 1/4. Its function is as follows. Catalyzes the condensation of the acetyl group of acetyl-CoA with 3-methyl-2-oxobutanoate (2-ketoisovalerate) to form 3-carboxy-3-hydroxy-4-methylpentanoate (2-isopropylmalate). The polypeptide is 2-isopropylmalate synthase (Gloeobacter violaceus (strain ATCC 29082 / PCC 7421)).